Here is a 180-residue protein sequence, read N- to C-terminus: Riboflavin kinase (180 aa).

Mg(2+) contacts are provided by Thr40 and Asn42. The active-site Nucleophile is Glu117.

The protein belongs to the flavokinase family. It depends on Zn(2+) as a cofactor. Mg(2+) is required as a cofactor.

The enzyme catalyses riboflavin + ATP = FMN + ADP + H(+). Its pathway is cofactor biosynthesis; FMN biosynthesis; FMN from riboflavin (ATP route): step 1/1. Its function is as follows. Catalyzes the phosphorylation of riboflavin (vitamin B2) to form flavin mononucleotide (FMN) coenzyme. This is Riboflavin kinase (FMN1) from Meyerozyma guilliermondii (strain ATCC 6260 / CBS 566 / DSM 6381 / JCM 1539 / NBRC 10279 / NRRL Y-324) (Yeast).